An 869-amino-acid chain; its full sequence is Valine--tRNA ligase (869 aa).

Residues 47-57 carry the 'HIGH' region motif; that stretch reads PYPTGNFHIGN. The 'KMSKS' region motif lies at 521-525; that stretch reads KMSKS. ATP is bound at residue K524.

It belongs to the class-I aminoacyl-tRNA synthetase family. ValS type 2 subfamily.

It localises to the cytoplasm. The enzyme catalyses tRNA(Val) + L-valine + ATP = L-valyl-tRNA(Val) + AMP + diphosphate. Catalyzes the attachment of valine to tRNA(Val). As ValRS can inadvertently accommodate and process structurally similar amino acids such as threonine, to avoid such errors, it has a 'posttransfer' editing activity that hydrolyzes mischarged Thr-tRNA(Val) in a tRNA-dependent manner. The sequence is that of Valine--tRNA ligase from Methanosarcina mazei (strain ATCC BAA-159 / DSM 3647 / Goe1 / Go1 / JCM 11833 / OCM 88) (Methanosarcina frisia).